We begin with the raw amino-acid sequence, 87 residues long: Small ribosomal subunit protein uS15c (87 aa).

Belongs to the universal ribosomal protein uS15 family. In terms of assembly, part of the 30S ribosomal subunit.

The protein resides in the plastid. The protein localises to the chloroplast. This chain is Small ribosomal subunit protein uS15c (rps15), found in Atropa belladonna (Belladonna).